Reading from the N-terminus, the 487-residue chain is Glutamate mutase epsilon subunit (487 aa).

Residue arginine 62 coordinates L-glutamate. Glycine 64 serves as a coordination point for adenosylcob(III)alamin. Residue arginine 96 coordinates L-glutamate. Residue asparagine 119 coordinates adenosylcob(III)alamin. L-glutamate contacts are provided by residues 145–146 (RH), glutamate 167, and tyrosine 173. Position 176 (proline 176) interacts with adenosylcob(III)alamin. Tyrosine 177 is a binding site for L-glutamate. The adenosylcob(III)alamin site is built by phenylalanine 289, lysine 318, and glutamate 322. Residues 465-487 (SDGKLIGRPGGDNSPAGGASDAD) form a disordered region.

This sequence belongs to the methylaspartate mutase GlmE subunit family. Heterotetramer composed of 2 epsilon subunits (GlmE) and 2 sigma subunits (GlmS). GlmE exists as a homodimer and GlmS as a monomer. Adenosylcob(III)alamin serves as cofactor.

It carries out the reaction (2S,3S)-3-methyl-L-aspartate = L-glutamate. It participates in amino-acid degradation; L-glutamate degradation via mesaconate pathway; acetate and pyruvate from L-glutamate: step 1/4. Catalyzes the carbon skeleton rearrangement of L-glutamate to L-threo-3-methylaspartate ((2S,3S)-3-methylaspartate). This is Glutamate mutase epsilon subunit from Haloarcula marismortui (strain ATCC 43049 / DSM 3752 / JCM 8966 / VKM B-1809) (Halobacterium marismortui).